Consider the following 165-residue polypeptide: MTMSIRIGNGYDIHRLVSDRALILGGVHIPHELGLLGHSDADVLTHAIMDAMLGALSLGDIGHYFPPTDPQWAGADSLVLLSQVNELIRTQGWRIGNIDSVVVAERPKLKPHIKTMRDKLADILQLEPNQIGVKATTNEKLGPVGREEGICAYAVVLLVSSDEIS.

Residues D12 and H14 each contribute to the a divalent metal cation site. Residues 12 to 14 (DIH) and 38 to 39 (HS) each bind 4-CDP-2-C-methyl-D-erythritol 2-phosphate. H46 contacts a divalent metal cation. 4-CDP-2-C-methyl-D-erythritol 2-phosphate contacts are provided by residues 60-62 (DIG), 136-139 (TTNE), and R146.

It belongs to the IspF family. As to quaternary structure, homotrimer. It depends on a divalent metal cation as a cofactor.

The enzyme catalyses 4-CDP-2-C-methyl-D-erythritol 2-phosphate = 2-C-methyl-D-erythritol 2,4-cyclic diphosphate + CMP. Its pathway is isoprenoid biosynthesis; isopentenyl diphosphate biosynthesis via DXP pathway; isopentenyl diphosphate from 1-deoxy-D-xylulose 5-phosphate: step 4/6. Its function is as follows. Involved in the biosynthesis of isopentenyl diphosphate (IPP) and dimethylallyl diphosphate (DMAPP), two major building blocks of isoprenoid compounds. Catalyzes the conversion of 4-diphosphocytidyl-2-C-methyl-D-erythritol 2-phosphate (CDP-ME2P) to 2-C-methyl-D-erythritol 2,4-cyclodiphosphate (ME-CPP) with a corresponding release of cytidine 5-monophosphate (CMP). The polypeptide is 2-C-methyl-D-erythritol 2,4-cyclodiphosphate synthase (Nostoc sp. (strain PCC 7120 / SAG 25.82 / UTEX 2576)).